A 239-amino-acid polypeptide reads, in one-letter code: RING finger protein 151 (239 aa).

The RING-type zinc-finger motif lies at 20–58 (CSVCHGVLKRPTRLPCSHIFCKKCIFRWLARQNTCPCCR). The TRAF-type zinc finger occupies 101 to 156 (EHQDSCPFELMACPNEGCTVQVLRGVLDEHRQHCQQNGQQRCPLGCGSTLAALEGE).

In terms of assembly, interacts with DTNBP1. Expressed in testis. Expressed in round spermatids of the stages VII-VIII semniniferous tubules. Expressed in elongating spermatids of stages VIII-IX seminiferous tubules (at protein level).

Its subcellular location is the cytoplasm. It is found in the nucleus. May be involved in acrosome formation of spermatids. This is RING finger protein 151 (Rnf151) from Mus musculus (Mouse).